The following is a 387-amino-acid chain: Formate-dependent phosphoribosylglycinamide formyltransferase (387 aa).

N(1)-(5-phospho-beta-D-ribosyl)glycinamide-binding positions include 21 to 22 and Glu81; that span reads EL. Residues Arg113, Lys154, 159–164, 193–196, and Glu201 contribute to the ATP site; these read SSGHGQ and EEFV. The region spanning 118 to 306 is the ATP-grasp domain; sequence VFAAETLDLK…EFALHVRAVL (189 aa). Glu265 and Glu277 together coordinate Mg(2+). N(1)-(5-phospho-beta-D-ribosyl)glycinamide-binding positions include Asp284, Lys352, and 359–360; that span reads RR.

This sequence belongs to the PurK/PurT family. In terms of assembly, homodimer.

It carries out the reaction N(1)-(5-phospho-beta-D-ribosyl)glycinamide + formate + ATP = N(2)-formyl-N(1)-(5-phospho-beta-D-ribosyl)glycinamide + ADP + phosphate + H(+). Its pathway is purine metabolism; IMP biosynthesis via de novo pathway; N(2)-formyl-N(1)-(5-phospho-D-ribosyl)glycinamide from N(1)-(5-phospho-D-ribosyl)glycinamide (formate route): step 1/1. In terms of biological role, involved in the de novo purine biosynthesis. Catalyzes the transfer of formate to 5-phospho-ribosyl-glycinamide (GAR), producing 5-phospho-ribosyl-N-formylglycinamide (FGAR). Formate is provided by PurU via hydrolysis of 10-formyl-tetrahydrofolate. The chain is Formate-dependent phosphoribosylglycinamide formyltransferase from Sulfurovum sp. (strain NBC37-1).